The sequence spans 457 residues: Adenylosuccinate synthetase isozyme 1 (457 aa).

The interval 1 to 25 is disordered; that stretch reads MSGTRASNDRPPSAGGVKRGRLQHE. Residues 42–48 and 70–72 each bind GTP; these read GDEGKGK and GHT. The active-site Proton acceptor is Asp43. Asp43 and Gly70 together coordinate Mg(2+). Asp43 is a binding site for substrate. IMP-binding positions include 43-46, 68-71, Thr163, Arg177, Asn256, Thr271, and Arg335; these read DEGK and NAGH. The active-site Proton donor is the His71. 331-337 lines the substrate pocket; it reads VTTGRKR. GTP-binding positions include Arg337, 363 to 365, and 445 to 448; these read KLD and GVGK.

Belongs to the adenylosuccinate synthetase family. As to quaternary structure, homodimer. Requires Mg(2+) as cofactor. As to expression, predominantly expressed in the striated muscle tissues.

It is found in the cytoplasm. The catalysed reaction is IMP + L-aspartate + GTP = N(6)-(1,2-dicarboxyethyl)-AMP + GDP + phosphate + 2 H(+). The protein operates within purine metabolism; AMP biosynthesis via de novo pathway; AMP from IMP: step 1/2. In terms of biological role, component of the purine nucleotide cycle (PNC), which interconverts IMP and AMP to regulate the nucleotide levels in various tissues, and which contributes to glycolysis and ammoniagenesis. Catalyzes the first committed step in the biosynthesis of AMP from IMP. The sequence is that of Adenylosuccinate synthetase isozyme 1 from Sus scrofa (Pig).